Consider the following 659-residue polypeptide: Protein real-time (659 aa).

The PRELI/MSF1 domain maps to 3–175; the sequence is QKFQSPVRVY…FIGQLREEGI (173 aa). Residues 286–462 enclose the CRAL-TRIO domain; it reads KPAVVVEHFP…FLGGPCKTMI (177 aa). Serine 477 is subject to Phosphoserine. Residues 512 to 631 enclose the GOLD domain; that stretch reads HRNLYKSVDL…QLNVFYEVLS (120 aa).

In terms of tissue distribution, restricted to the developing gut and central nervous system (CNS).

The protein localises to the mitochondrion. In Drosophila melanogaster (Fruit fly), this protein is Protein real-time (retm).